The primary structure comprises 113 residues: uncharacterized protein (113 aa).

This is an uncharacterized protein from Bacillus subtilis (strain 168).